The sequence spans 229 residues: Lipoprotein-releasing system ATP-binding protein LolD (229 aa).

An ABC transporter domain is found at 6 to 226 (LELKSVDRHY…TLSDGRVVEL (221 aa)). 42–49 (APSGTGKS) is an ATP binding site.

This sequence belongs to the ABC transporter superfamily. Lipoprotein translocase (TC 3.A.1.125) family. In terms of assembly, the complex is composed of two ATP-binding proteins (LolD) and two transmembrane proteins (LolC and LolE).

The protein resides in the cell inner membrane. Part of the ABC transporter complex LolCDE involved in the translocation of mature outer membrane-directed lipoproteins, from the inner membrane to the periplasmic chaperone, LolA. Responsible for the formation of the LolA-lipoprotein complex in an ATP-dependent manner. In Chelativorans sp. (strain BNC1), this protein is Lipoprotein-releasing system ATP-binding protein LolD.